The following is a 454-amino-acid chain: tRNA-2-methylthio-N(6)-dimethylallyladenosine synthase (454 aa).

The region spanning 11-128 (KKLYIQTHGC…LPEMIETPRE (118 aa)) is the MTTase N-terminal domain. Positions 20, 57, 91, 165, 169, and 172 each coordinate [4Fe-4S] cluster. The Radical SAM core domain maps to 151 to 382 (EADGATAFVS…QTRIIQQAQE (232 aa)). One can recognise a TRAM domain in the interval 385–449 (RRMVGNTERV…PNSLRGVLLG (65 aa)).

It belongs to the methylthiotransferase family. MiaB subfamily. In terms of assembly, monomer. The cofactor is [4Fe-4S] cluster.

The protein localises to the cytoplasm. The enzyme catalyses N(6)-dimethylallyladenosine(37) in tRNA + (sulfur carrier)-SH + AH2 + 2 S-adenosyl-L-methionine = 2-methylsulfanyl-N(6)-dimethylallyladenosine(37) in tRNA + (sulfur carrier)-H + 5'-deoxyadenosine + L-methionine + A + S-adenosyl-L-homocysteine + 2 H(+). In terms of biological role, catalyzes the methylthiolation of N6-(dimethylallyl)adenosine (i(6)A), leading to the formation of 2-methylthio-N6-(dimethylallyl)adenosine (ms(2)i(6)A) at position 37 in tRNAs that read codons beginning with uridine. The sequence is that of tRNA-2-methylthio-N(6)-dimethylallyladenosine synthase from Saccharophagus degradans (strain 2-40 / ATCC 43961 / DSM 17024).